The following is a 41-amino-acid chain: Photosystem I reaction center subunit IX (41 aa).

A helical membrane pass occupies residues 7–27 (YLSTAPVLTLVSLTAVAGLLI).

The protein belongs to the PsaJ family.

It localises to the plastid. Its subcellular location is the chloroplast thylakoid membrane. May help in the organization of the PsaE and PsaF subunits. The chain is Photosystem I reaction center subunit IX from Chlorella vulgaris (Green alga).